The chain runs to 298 residues: Olfactory receptor 5AK3 (298 aa).

Residues 1-25 (MGRGNSTEVTEFHLLGFGVQHEFQH) are Extracellular-facing. A glycan (N-linked (GlcNAc...) asparagine) is linked at Asn-5. The helical transmembrane segment at 26 to 46 (VLFIVLLLIYVTSLIGNIGMI) threads the bilayer. The Cytoplasmic portion of the chain corresponds to 47–54 (LLIKTDSR). The chain crosses the membrane as a helical span at residues 55 to 75 (LQTPMYFFPQHLAFVDICYTS). Over 76-99 (AITPKMLQSFTEENNLITFRGCVI) the chain is Extracellular. An intrachain disulfide couples Cys-97 to Cys-189. The helical transmembrane segment at 100–120 (QFLVYATFATSDCYLLAIMAM) threads the bilayer. Residues 121–133 (DCYVAICKPLRYP) lie on the Cytoplasmic side of the membrane. Residues 134–154 (MIMSQTVYIQLVAGSYIIGSI) form a helical membrane-spanning segment. An N-linked (GlcNAc...) asparagine glycan is attached at Asn-155. Topologically, residues 155 to 196 (NASVHTGFTFSLSFCKSNKINHFFCDGLPILALSCSNIDINI) are extracellular. Residues 197–217 (ILDVVFVGFDLMFTELVIIFS) form a helical membrane-spanning segment. Residues 218–237 (YIYIMVTILKMSSTAGRKKS) are Cytoplasmic-facing. A helical membrane pass occupies residues 238 to 258 (FSTCASHLTAVTIFYGTLSYM). The Extracellular portion of the chain corresponds to 259 to 271 (YLQPQSNNSQENM). A glycan (N-linked (GlcNAc...) asparagine) is linked at Asn-265. The helical transmembrane segment at 272–292 (KVASIFYGTVIPMLNPLIYSL) threads the bilayer. Residues 293-298 (RNKEGK) are Cytoplasmic-facing.

It belongs to the G-protein coupled receptor 1 family.

It is found in the cell membrane. In terms of biological role, odorant receptor. The polypeptide is Olfactory receptor 5AK3 (OR5AK3P) (Homo sapiens (Human)).